The chain runs to 459 residues: Cysteine--tRNA ligase (459 aa).

Residue C31 coordinates Zn(2+). The 'HIGH' region signature appears at 33–43 (PTVYYNPHIGN). C216, H241, and E245 together coordinate Zn(2+). The short motif at 274–278 (KMSKS) is the 'KMSKS' region element. An ATP-binding site is contributed by K277.

Belongs to the class-I aminoacyl-tRNA synthetase family. Monomer. Zn(2+) is required as a cofactor.

It localises to the cytoplasm. The catalysed reaction is tRNA(Cys) + L-cysteine + ATP = L-cysteinyl-tRNA(Cys) + AMP + diphosphate. This is Cysteine--tRNA ligase from Rickettsia africae (strain ESF-5).